Consider the following 4388-residue polypeptide: Intermembrane lipid transfer protein VPS13D (4388 aa).

The region spanning 2–115 is the Chorein N-terminal domain; sequence LEGLVAWVLN…ERERKKALLQ (114 aa). Serine 663 carries the post-translational modification Phosphoserine. The segment at 745 to 796 is disordered; that stretch reads QDNSRRKSRDGSASEETQFSDDEYKTPLATPPNTPPPESSSSNGEKTPPFSG. Residues 747-756 show a composition bias toward basic and acidic residues; sequence NSRRKSRDGS. Residues 773 to 782 are compositionally biased toward pro residues; sequence ATPPNTPPPE. A phosphoserine mark is found at serine 1034, serine 1038, serine 1042, serine 1138, and serine 1341. The segment at 1563–1582 is disordered; sequence ASATSSPCPDSPLPPLSTCG. Phosphoserine is present on residues serine 1598, serine 1603, and serine 1699. Disordered stretches follow at residues 1741 to 1771, 2070 to 2108, and 2122 to 2145; these read RPTS…VDEP, QDKE…QFTM, and FVPS…ESSS. Threonine 1761 is subject to Phosphothreonine. Residue serine 1765 is modified to Phosphoserine. Over residues 2123–2144 the composition is skewed to polar residues; the sequence is VPSTSTKQQGPQPTLSVGQESS. A phosphoserine mark is found at serine 2435, serine 2671, serine 2861, serine 2864, and serine 2983. One can recognise a UBA domain in the interval 2633–2676; that stretch reads TLDPVLELQLARLQELGFSMDDCRKALLACQGQLKKAASWLFKN. An SHR-BD domain is found at 3276–3558; it reads LKIFISAPYW…LDYAWDEPTL (283 aa). Lysine 3524 is modified (N6-acetyllysine).

It belongs to the VPS13 family. Widely expressed.

Functionally, mediates the transfer of lipids between membranes at organelle contact sites. Functions in promoting mitochondrial clearance by mitochondrial autophagy (mitophagy), also possibly by positively regulating mitochondrial fission. Mitophagy plays an important role in regulating cell health and mitochondrial size and homeostasis. The polypeptide is Intermembrane lipid transfer protein VPS13D (Homo sapiens (Human)).